The primary structure comprises 205 residues: Troponin I, cardiac muscle (205 aa).

A disordered region spans residues 1 to 38; it reads MADQSGNAAPPPVRRRSSANYRAYATEPHAKKKSKISA. Ala-2 is modified (N-acetylalanine). Ser-5 carries the phosphoserine modification. Ser-17 and Ser-18 each carry phosphoserine; by PKA and PKD/PRKD1. Position 21 is a phosphotyrosine (Tyr-21). Phosphothreonine; by STK4/MST1 is present on Thr-26. The interval 27-74 is involved in binding TNC; sequence EPHAKKKSKISASRKLQLKTLMLQIAKQELEREAVERRGEKGRALSTR. Ser-37 and Ser-39 each carry phosphoserine; by PKC/PRKCE. Residue Thr-46 is modified to Phosphothreonine; by STK4/MST1. Ser-72 is modified (phosphoserine). Phosphothreonine is present on Thr-73. The interval 124 to 145 is involved in binding TNC and actin; that stretch reads NQKIFDLRGKFKRPTLRRVRIS. At Thr-138 the chain carries Phosphothreonine; by STK4/MST1. Ser-145 bears the Phosphoserine; by PAK3 mark. At Thr-176 the chain carries Phosphothreonine. Ser-194 bears the Phosphoserine mark.

The protein belongs to the troponin I family. As to quaternary structure, binds to actin and tropomyosin. Interacts with TRIM63. Interacts with STK4/MST1. Phosphorylated at Ser-17 and Ser-18 by PRKD1; phosphorylation reduces myofilament calcium sensitivity. Phosphorylated preferentially at Thr-26. Phosphorylation by STK4/MST1 alters its binding affinity to TNNC1 (cardiac Tn-C) and TNNT2 (cardiac Tn-T). Phosphorylated at Ser-37 and Ser-39 by PRKCE; phosphorylation increases myocardium contractile dysfunction.

Its function is as follows. Troponin I is the inhibitory subunit of troponin, the thin filament regulatory complex which confers calcium-sensitivity to striated muscle actomyosin ATPase activity. This Equus caballus (Horse) protein is Troponin I, cardiac muscle (TNNI3).